A 56-amino-acid chain; its full sequence is uncharacterized protein (56 aa).

Residues 21–38 (HTHTPHPHHTHTHTHHTP) show a composition bias toward basic residues. The interval 21–40 (HTHTPHPHHTHTHTHHTPTH) is disordered.

This is an uncharacterized protein from Saccharomyces cerevisiae (strain ATCC 204508 / S288c) (Baker's yeast).